A 104-amino-acid chain; its full sequence is Large ribosomal subunit protein uL24 (104 aa).

It belongs to the universal ribosomal protein uL24 family. As to quaternary structure, part of the 50S ribosomal subunit.

Functionally, one of two assembly initiator proteins, it binds directly to the 5'-end of the 23S rRNA, where it nucleates assembly of the 50S subunit. In terms of biological role, one of the proteins that surrounds the polypeptide exit tunnel on the outside of the subunit. This Corynebacterium aurimucosum (strain ATCC 700975 / DSM 44827 / CIP 107346 / CN-1) (Corynebacterium nigricans) protein is Large ribosomal subunit protein uL24.